The following is a 362-amino-acid chain: MPIVELADPICPVCEFPSNVELHFGGLVCGACAAFFRRTVSLNIRYLCEKNNQCKGMRKNCRACRFDYCVKIAGMKRNLVKQRRNSTNTPMYILNRRKDSGNEEVVRGMLKRMYLQFSSFSGFVTTTQSKWAHHSRKSSMSPNKEAEKDVSKILKISHGSLLKYYIYQITHDKRNNMNTLNIKSVEEFLEITSVQNKLAAELCKTCPGVDLLDNEDILILRKYFQFSNVWIESTWNYLRENNSVPIDDSELDLKLLKFINQVKSTLLVSFSQLKFNTIEFAAFKSICIWKLVYHETSRAMKIIAQEHYESVMKALNDYYQTYTSMDSMQIATRIGEITLLIISVFQMYHDMAKLYIQLGLPF.

A DNA-binding region (nuclear receptor) is located at residues 8–82 (DPICPVCEFP…AGMKRNLVKQ (75 aa)). 2 consecutive NR C4-type zinc fingers follow at residues 11 to 32 (CPVC…CGAC) and 48 to 69 (CEKN…FDYC). The NR LBD domain maps to 145–362 (EAEKDVSKIL…KLYIQLGLPF (218 aa)).

Belongs to the nuclear hormone receptor family.

Its subcellular location is the nucleus. Orphan nuclear receptor. The protein is Nuclear hormone receptor family member nhr-77 (nhr-77) of Caenorhabditis elegans.